The sequence spans 160 residues: Phosphopantetheine adenylyltransferase (160 aa).

Ser-9 contacts substrate. ATP-binding positions include 9 to 10 and His-17; that span reads SF. Positions 41, 73, and 87 each coordinate substrate. Residues 88 to 90, Glu-98, and 122 to 128 contribute to the ATP site; these read GLR and YSFVSSS.

The protein belongs to the bacterial CoaD family. In terms of assembly, homohexamer. Mg(2+) is required as a cofactor.

Its subcellular location is the cytoplasm. The catalysed reaction is (R)-4'-phosphopantetheine + ATP + H(+) = 3'-dephospho-CoA + diphosphate. It participates in cofactor biosynthesis; coenzyme A biosynthesis; CoA from (R)-pantothenate: step 4/5. Its function is as follows. Reversibly transfers an adenylyl group from ATP to 4'-phosphopantetheine, yielding dephospho-CoA (dPCoA) and pyrophosphate. The protein is Phosphopantetheine adenylyltransferase of Mycolicibacterium gilvum (strain PYR-GCK) (Mycobacterium gilvum (strain PYR-GCK)).